The following is a 71-amino-acid chain: uncharacterized protein (71 aa).

It belongs to the ycf40 family.

The protein localises to the plastid. The protein resides in the chloroplast. This is an uncharacterized protein from Porphyra purpurea (Red seaweed).